We begin with the raw amino-acid sequence, 346 residues long: MSESTEITESSVEAAVEAALAAIAAAGDSEALKVVRHDHTAEGSPLAQLNAGIRSLPGDRKAAAGKLVGGARGRVSQALAAKEAGIAAAEEAAQLVAEAVDVTALPNRWTSGARHPLSLLQERIADVFVGMGWQVAEGPELESEWYNFDALNFDADHPARAMQDTFFVEPAEAHLVMRTHTSPVQLRALLGDELPVYRIASGRVFRTDEFDATHLPVFHQTEGIAVDKGLTMAHLRGTLDHFVETLFGEGARVRLRPNYFPFTEPSAELDLWHPTFAGGARWIEWGGCGMVNPNVLRSAGIDPEVYSGFAFGMGVERALMFRNDVKDMRDMAEGDVRFSQQFGMVV.

Glutamate 264 is a Mg(2+) binding site.

This sequence belongs to the class-II aminoacyl-tRNA synthetase family. Phe-tRNA synthetase alpha subunit type 1 subfamily. Tetramer of two alpha and two beta subunits. Mg(2+) serves as cofactor.

The protein localises to the cytoplasm. The catalysed reaction is tRNA(Phe) + L-phenylalanine + ATP = L-phenylalanyl-tRNA(Phe) + AMP + diphosphate + H(+). The chain is Phenylalanine--tRNA ligase alpha subunit from Leifsonia xyli subsp. xyli (strain CTCB07).